The following is a 394-amino-acid chain: GPI transamidase component GAB1 (394 aa).

Residues 1-135 (MDSTALKVAL…TLLSCISRSS (135 aa)) lie on the Cytoplasmic side of the membrane. A helical membrane pass occupies residues 136 to 156 (IIFTNFAISSSLYCILAEGNV). Over 157 to 160 (LLSS) the chain is Lumenal. A helical transmembrane segment spans residues 161–181 (VMISISGYLSVYPILLLIPLL). The Cytoplasmic portion of the chain corresponds to 182–190 (GMLKSWRQR). Residues 191 to 211 (ILSAIVSILSLLILLLFSYSI) form a helical membrane-spanning segment. At 212–224 (LGSQSWSFLTQVY) the chain is on the lumenal side. The chain crosses the membrane as a helical span at residues 225 to 245 (GSIITFEKVFPNLGLWWYFFI). Residues 235-255 (PNLGLWWYFFIEMFDTFIPFF) form a may be involved in recognition of long-chain fatty acids in GPI region. Topologically, residues 246–250 (EMFDT) are cytoplasmic. The helical transmembrane segment at 251 to 271 (FIPFFKAVFNIFIAVFITPFT) threads the bilayer. Residues 272 to 297 (LRYHKQPFYAFILCIGWIVLTKPYPS) lie on the Lumenal side of the membrane. A helical membrane pass occupies residues 298-318 (LGDAGFFFSFLPFFTPLFGYL). Residues 319-324 (RYPIIS) lie on the Cytoplasmic side of the membrane. A helical transmembrane segment spans residues 325–345 (ALLFLHAIVLAPIFYHLWVVL). At 346–351 (GSGNSN) the chain is on the lumenal side. A helical transmembrane segment spans residues 352–372 (FFYAISLVYALAIASILVDLN). The Cytoplasmic segment spans residues 373–394 (WAMLRIEYDNGIPNFKLKVTQI).

Belongs to the PIGU family. As to quaternary structure, forms a complex with GPI16, GPI17, GPI8 and GAA1.

The protein resides in the endoplasmic reticulum membrane. Its pathway is glycolipid biosynthesis; glycosylphosphatidylinositol-anchor biosynthesis. Its function is as follows. Component of the GPI transamidase complex. May be involved in the recognition of either the GPI attachment signal or the lipid portion of GPI. In Saccharomyces cerevisiae (strain ATCC 204508 / S288c) (Baker's yeast), this protein is GPI transamidase component GAB1 (GAB1).